The primary structure comprises 1356 residues: MQSKVLLAVALWLCVETRAASVGLPSVSLDLPRLSIQKDILTIKANTTLQITCRGQRDLDWLWPNNQSGSEQRVEVTECSDGLFCKTLTIPKVIGNDTGAYKCFYRETDLASVIYVYVQDYRSPFIASVSDQHGVVYITENKNKTVVIPCLGSISNLNVSLCARYPEKRFVPDGNRISWDSKKGFTIPSYMISYAGMVFCEAKINDESYQSIMYIVVVVGYRIYDVVLSPSHGIELSVGEKLVLNCTARTELNVGIDFNWEYPSSKHQHKKLVNRDLKTQSGSEMKKFLSTLTIDGVTRSDQGLYTCAASSGLMTKKNSTFVRVHEKPFVAFGSGMESLVEATVGERVRIPAKYLGYPPPEIKWYKNGIPLESNHTIKAGHVLTIMEVSERDTGNYTVILTNPISKEKQSHVVSLVVYVPPQIGEKSLISPVDSYQYGTTQTLTCTVYAIPPPHHIHWYWQLEEECANEPSQAVSVTNPYPCEEWRSVEDFQGGNKIEVNKNQFALIEGKNKTVSTLVIQAANVSALYKCEAVNKVGRGERVISFHVTRGPEITLQPDMQPTEQESVSLWCTADRSTFENLTWYKLGPQPLPIHVGELPTPVCKNLDTLWKLNATMFSNSTNDILIMELKNASLQDQGDYVCLAQDRKTKKRHCVVRQLTVLERVAPTITGNLENQTTSIGESIEVSCTASGNPPPQIMWFKDNETLVEDSGIVLKDGNRNLTIRRVRKEDEGLYTCQACSVLGCAKVEAFFIIEGAQEKTNLEIIILVGTAVIAMFFWLLLVIILRTVKRANGGELKTGYLSIVMDPDELPLDEHCERLPYDASKWEFPRDRLKLGKPLGRGAFGQVIEADAFGIDKTATCRTVAVKMLKEGATHSEHRALMSELKILIHIGHHLNVVNLLGACTKPGGPLMVIVEFCKFGNLSTYLRSKRNEFVPYKTKGARFRQGKDYVGAIPVDLKRRLDSITSSQSSASSGFVEEKSLSDVEEEEAPEDLYKDFLTLEHLICYSFQVAKGMEFLASRKCIHRDLAARNILLSEKNVVKICDFGLARDIYKDPDYVRKGDARLPLKWMAPETIFDRVYTIQSDVWSFGVLLWEIFSLGASPYPGVKIDEEFCRRLKEGTRMRAPDYTTPEMYQTMLDCWHGEPSQRPTFSELVEHLGNLLQANAQQDGKDYIVLPISETLSMEEDSGLSLPTSPVSCMEEEEVCDPKFHYDNTAGISQYLQNSKRKSRPVSVKTFEDIPLEEPEVKVIPDDNQTDSGMVLASEELKTLEDRTKLSPSFGGMVPSKSRESVASEGSNQTSGYQSGYHSDDTDTTVYSSEEAELLKLIEIGVQTGSTAQILQPDSGTTLSSPPV.

The N-terminal stretch at 1 to 19 (MQSKVLLAVALWLCVETRA) is a signal peptide. The Extracellular segment spans residues 20-764 (ASVGLPSVSL…EGAQEKTNLE (745 aa)). N-linked (GlcNAc...) asparagine glycans are attached at residues N46, N66, N96, N143, N158, and N245. 7 consecutive Ig-like C2-type domains span residues 46–110 (NTTL…ETDL), 141–207 (NKNK…INDE), 224–320 (YDVV…KNST), 328–414 (PFVA…HVVS), 421–548 (PQIG…FHVT), 551–660 (PEIT…RQLT), and 667–753 (PTIT…AFFI). Cysteines 53 and 103 form a disulfide. A disulfide bridge connects residues C150 and C200. C246 and C307 are oxidised to a cystine. 12 N-linked (GlcNAc...) asparagine glycosylation sites follow: N318, N374, N395, N511, N523, N580, N613, N619, N631, N675, N704, and N721. 2 disulfide bridges follow: C445-C530 and C571-C642. A disulfide bridge connects residues C688 and C737. The helical transmembrane segment at 765 to 785 (IIILVGTAVIAMFFWLLLVII) threads the bilayer. The Cytoplasmic portion of the chain corresponds to 786 to 1356 (LRTVKRANGG…SGTTLSSPPV (571 aa)). The residue at position 801 (Y801) is a Phosphotyrosine. The Protein kinase domain maps to 834–1162 (LKLGKPLGRG…FSELVEHLGN (329 aa)). ATP contacts are provided by residues 840-848 (LGRGAFGQV) and K868. A Phosphotyrosine; by autocatalysis modification is found at Y951. 2 positions are modified to phosphoserine: S982 and S984. Y996 bears the Phosphotyrosine; by autocatalysis mark. C1024 and C1045 are oxidised to a cystine. Catalysis depends on D1028, which acts as the Proton acceptor. Residues Y1054, Y1059, Y1175, and Y1214 each carry the phosphotyrosine; by autocatalysis modification. 2 positions are modified to phosphoserine: S1231 and S1235. T1238 carries the post-translational modification Phosphothreonine. The disordered stretch occupies residues 1274–1318 (DRTKLSPSFGGMVPSKSRESVASEGSNQTSGYQSGYHSDDTDTTV). Positions 1296–1309 (SEGSNQTSGYQSGY) are enriched in polar residues. Phosphotyrosine; by autocatalysis occurs at positions 1305, 1309, and 1319.

Belongs to the protein kinase superfamily. Tyr protein kinase family. CSF-1/PDGF receptor subfamily. Homodimer in the presence of bound dimeric VEGFA, VEGFC or VEGFD ligands; monomeric in the absence of bound ligands. Can also form heterodimers with FLT1/VEGFR1 and KDR/VEGFR2. Interacts (tyrosine phosphorylated) with LFYN, NCK1, PLCG1. Interacts (tyrosine-phosphorylated active form preferentially) with DAB2IP (via C2 domain and active form preferentially); the interaction occurs at the late phase of VEGFA response and inhibits KDR/VEGFR2 activity. Interacts with SHBSH2D2A/TSAD, GRB2, MYOF, CBL and PDCD6. Interacts (via C-terminus domain) with ERN1 (via kinase domain); the interaction is facilitated in a XBP1 isoform 1- and vascular endothelial growth factor (VEGF)-dependent manner in endothelial cells. Interacts (via juxtamembrane region) with chaperone PDCL3 (via thioredoxin fold region); the interaction leads to increased KDR/VEGFR2 abundance through inhibition of its ubiquitination and degradation. Interacts (tyrosine phosphorylated) with CCDC88A/GIV (via SH2-like region); binding requires autophosphorylation of the KDR/VEGFR2 C-terminal region. Interacts with isoform 2 of BSG. Interacts with SLC31A1; this interaction is induced upon VEGFA stimulation leading to SLC31A1 and KDR subsequent co-internalization to early endosomes, thereby activating KDR downstream signaling in endothelial cells. As to quaternary structure, (Microbial infection) Interacts with HIV-1 Tat. Post-translationally, N-glycosylated. Ubiquitinated. Tyrosine phosphorylation of the receptor promotes its poly-ubiquitination, leading to its degradation via the proteasome or lysosomal proteases. In terms of processing, autophosphorylated on tyrosine residues upon ligand binding. Autophosphorylation occurs in trans, i.e. one subunit of the dimeric receptor phosphorylates tyrosine residues on the other subunit. Phosphorylation at Tyr-951 is important for interaction with SH2D2A/TSAD and VEGFA-mediated reorganization of the actin cytoskeleton. Phosphorylation at Tyr-1175 is important for interaction with PLCG1 and SHB. Phosphorylation at Tyr-1214 is important for interaction with NCK1 and FYN. Dephosphorylated by PTPRB. Dephosphorylated by PTPRJ at Tyr-951, Tyr-996, Tyr-1054, Tyr-1059, Tyr-1175 and Tyr-1214. Post-translationally, the inhibitory disulfide bond between Cys-1024 and Cys-1045 may serve as a specific molecular switch for H(2)S-induced modification that regulates KDR/VEGFR2 function. In terms of tissue distribution, detected in cornea (at protein level). Widely expressed.

It is found in the cell junction. The protein resides in the endoplasmic reticulum. It localises to the cell membrane. Its subcellular location is the cytoplasm. The protein localises to the nucleus. It is found in the cytoplasmic vesicle. The protein resides in the early endosome. It localises to the secreted. It catalyses the reaction L-tyrosyl-[protein] + ATP = O-phospho-L-tyrosyl-[protein] + ADP + H(+). Present in an inactive conformation in the absence of bound ligand. Binding of VEGFA, VEGFC or VEGFD leads to dimerization and activation by autophosphorylation on tyrosine residues. Inhibited by the small molecule PTK inhibitor SU5614 ((3Z)-5-Chloro-3-[(3,5-dimethyl-1H-pyrrol-2-yl)methylene]-1,3-dihydro-2H-indol-2-one). May be regulated by hydrogen sulfide (H(2)S) levels via a H(2)S-sensitive intracellular disulfide bond. In terms of biological role, tyrosine-protein kinase that acts as a cell-surface receptor for VEGFA, VEGFC and VEGFD. Plays an essential role in the regulation of angiogenesis, vascular development, vascular permeability, and embryonic hematopoiesis. Promotes proliferation, survival, migration and differentiation of endothelial cells. Promotes reorganization of the actin cytoskeleton. Isoforms lacking a transmembrane domain, such as isoform 2 and isoform 3, may function as decoy receptors for VEGFA, VEGFC and/or VEGFD. Isoform 2 plays an important role as negative regulator of VEGFA- and VEGFC-mediated lymphangiogenesis by limiting the amount of free VEGFA and/or VEGFC and preventing their binding to FLT4. Modulates FLT1 and FLT4 signaling by forming heterodimers. Binding of vascular growth factors to isoform 1 leads to the activation of several signaling cascades. Activation of PLCG1 leads to the production of the cellular signaling molecules diacylglycerol and inositol 1,4,5-trisphosphate and the activation of protein kinase C. Mediates activation of MAPK1/ERK2, MAPK3/ERK1 and the MAP kinase signaling pathway, as well as of the AKT1 signaling pathway. Mediates phosphorylation of PIK3R1, the regulatory subunit of phosphatidylinositol 3-kinase, reorganization of the actin cytoskeleton and activation of PTK2/FAK1. Required for VEGFA-mediated induction of NOS2 and NOS3, leading to the production of the signaling molecule nitric oxide (NO) by endothelial cells. Phosphorylates PLCG1. Promotes phosphorylation of FYN, NCK1, NOS3, PIK3R1, PTK2/FAK1 and SRC. The sequence is that of Vascular endothelial growth factor receptor 2 from Homo sapiens (Human).